The primary structure comprises 247 residues: Small ribosomal subunit protein uS3 (247 aa).

The region spanning 51-119 is the KH type-2 domain; the sequence is VAKRDKRPAG…ELHLNIVEIR (69 aa). The span at 224-233 shows a compositional bias: basic and acidic residues; sequence PSAHDRRQQE. The disordered stretch occupies residues 224–247; it reads PSAHDRRQQELQESGGASRPRRDR.

Belongs to the universal ribosomal protein uS3 family. In terms of assembly, part of the 30S ribosomal subunit. Forms a tight complex with proteins S10 and S14.

In terms of biological role, binds the lower part of the 30S subunit head. Binds mRNA in the 70S ribosome, positioning it for translation. In Jannaschia sp. (strain CCS1), this protein is Small ribosomal subunit protein uS3.